A 160-amino-acid chain; its full sequence is Phosphopantetheine adenylyltransferase (160 aa).

Serine 8 is a substrate binding site. ATP contacts are provided by residues 8 to 9 (SF) and histidine 16. 3 residues coordinate substrate: lysine 40, leucine 74, and lysine 88. Residues 89-91 (GLR), glutamate 99, and 124-130 (YSFVSST) contribute to the ATP site.

Belongs to the bacterial CoaD family. In terms of assembly, homohexamer. Mg(2+) serves as cofactor.

It localises to the cytoplasm. It carries out the reaction (R)-4'-phosphopantetheine + ATP + H(+) = 3'-dephospho-CoA + diphosphate. Its pathway is cofactor biosynthesis; coenzyme A biosynthesis; CoA from (R)-pantothenate: step 4/5. Reversibly transfers an adenylyl group from ATP to 4'-phosphopantetheine, yielding dephospho-CoA (dPCoA) and pyrophosphate. The polypeptide is Phosphopantetheine adenylyltransferase (Thermus thermophilus (strain ATCC BAA-163 / DSM 7039 / HB27)).